Reading from the N-terminus, the 137-residue chain is Large ribosomal subunit protein uL16 (137 aa).

This sequence belongs to the universal ribosomal protein uL16 family. As to quaternary structure, part of the 50S ribosomal subunit.

Its function is as follows. Binds 23S rRNA and is also seen to make contacts with the A and possibly P site tRNAs. The sequence is that of Large ribosomal subunit protein uL16 from Psychrobacter sp. (strain PRwf-1).